Consider the following 458-residue polypeptide: Morphogenetic regulator of filamentous growth protein 1 (458 aa).

The disordered stretch occupies residues 401-458; it reads KKDSGSEPLHAKRRRNSGISPRTTTLGPNGNSNTSNEELPTSDVNDINKDMTKKKMKF. A compositionally biased stretch (polar residues) spans 417-445; it reads SGISPRTTTLGPNGNSNTSNEELPTSDVN. The segment covering 446–458 has biased composition (basic and acidic residues); the sequence is DINKDMTKKKMKF.

It belongs to the MFG1 family. In terms of assembly, interacts with FLO8 and MSS11, both morphogenetic transcription factors binding directly to the FLO11 promoter.

It is found in the nucleus. Its function is as follows. Transcriptional regulator with a general role in all morphogenetically distinct forms of filamentous growth, namely haploid invasive growth, biofilm formation, and diploid pseudohyphal growth. May control FLO11 gene expression as part of a promoter-bound complex with FLO8 and MSS1. The protein is Morphogenetic regulator of filamentous growth protein 1 (MFG1) of Saccharomyces cerevisiae (strain ATCC 204508 / S288c) (Baker's yeast).